A 688-amino-acid chain; its full sequence is Methionine--tRNA ligase (688 aa).

A 'HIGH' region motif is present at residues 13-23 (PYANGQIHIGH). C144, C147, C157, and C160 together coordinate Zn(2+). The 'KMSKS' region signature appears at 335-339 (KMSKS). K338 contributes to the ATP binding site. A tRNA-binding domain is found at 582–688 (DFAKIDLRVA…SGAVPGMRIG (107 aa)).

This sequence belongs to the class-I aminoacyl-tRNA synthetase family. MetG type 1 subfamily. Homodimer. Zn(2+) serves as cofactor.

It localises to the cytoplasm. It catalyses the reaction tRNA(Met) + L-methionine + ATP = L-methionyl-tRNA(Met) + AMP + diphosphate. In terms of biological role, is required not only for elongation of protein synthesis but also for the initiation of all mRNA translation through initiator tRNA(fMet) aminoacylation. The polypeptide is Methionine--tRNA ligase (Cupriavidus pinatubonensis (strain JMP 134 / LMG 1197) (Cupriavidus necator (strain JMP 134))).